Reading from the N-terminus, the 461-residue chain is Adenine DNA glycosylase (461 aa).

The active-site Proton donor/acceptor is the Glu69. Cys226, Cys233, Cys236, and Cys242 together coordinate [4Fe-4S] cluster. The 142-residue stretch at 296–437 folds into the Nudix hydrolase domain; sequence QREERALVVI…RAALEIKKRK (142 aa). The short motif at 340–366 is the Nudix box element; the sequence is FGQESWPKDMDAEFQKSIAQWISNDSR.

Belongs to the Nth/MutY family. As to quaternary structure, monomer. It depends on [4Fe-4S] cluster as a cofactor.

The catalysed reaction is Hydrolyzes free adenine bases from 7,8-dihydro-8-oxoguanine:adenine mismatched double-stranded DNA, leaving an apurinic site.. Functionally, adenine glycosylase active on G-A mispairs. Has glycosylase and nicking activities and is active at A/G and A/GO sites. This is Adenine DNA glycosylase (myh1) from Schizosaccharomyces pombe (strain 972 / ATCC 24843) (Fission yeast).